Consider the following 160-residue polypeptide: MD-2-related lipid-recognition protein ROSY1 (160 aa).

The N-terminal stretch at 1-23 (MAISHTQLLLLLLVSLFFSPALC) is a signal peptide.

Interacts with SYT1. In terms of tissue distribution, expressed exclusively in roots, in epidermis and cortex cells of the root elongation zone, and lateral root cap cells at the root tip.

The protein localises to the cytoplasm. Its function is as follows. Involved in the regulation of gravitropic response and basipetal auxin transport in roots. Involved in salt stress tolerance. May facilitate membrane trafficking and asymmetric cell elongation via SYT1. Binds stigmasterol and dipalmitoyl phosphoethanolamine (DPPE) in vitro. This is MD-2-related lipid-recognition protein ROSY1 from Arabidopsis thaliana (Mouse-ear cress).